A 611-amino-acid chain; its full sequence is BTB/POZ domain-containing protein 9 (611 aa).

Positions 36–104 constitute a BTB domain; the sequence is GDVTFVVEKK…IYTGRATLTD (69 aa). The BACK domain maps to 142–240; it reads VCMTFDVASL…SLTELLNVVR (99 aa). The tract at residues 560–611 is disordered; the sequence is QSAQKDSSDEPGTGGASAAGQQLDPHALQAPSGSSLPSSPGSNSRSPNRQHQ. The span at 586–611 shows a compositional bias: low complexity; that stretch reads ALQAPSGSSLPSSPGSNSRSPNRQHQ.

In Bos taurus (Bovine), this protein is BTB/POZ domain-containing protein 9 (BTBD9).